The primary structure comprises 239 residues: Ribonuclease PH (239 aa).

Residues arginine 86 and 124–126 (GTR) each bind phosphate.

This sequence belongs to the RNase PH family. As to quaternary structure, homohexameric ring arranged as a trimer of dimers.

It catalyses the reaction tRNA(n+1) + phosphate = tRNA(n) + a ribonucleoside 5'-diphosphate. Functionally, phosphorolytic 3'-5' exoribonuclease that plays an important role in tRNA 3'-end maturation. Removes nucleotide residues following the 3'-CCA terminus of tRNAs; can also add nucleotides to the ends of RNA molecules by using nucleoside diphosphates as substrates, but this may not be physiologically important. Probably plays a role in initiation of 16S rRNA degradation (leading to ribosome degradation) during starvation. The sequence is that of Ribonuclease PH from Rickettsia felis (strain ATCC VR-1525 / URRWXCal2) (Rickettsia azadi).